The sequence spans 870 residues: Histidine biosynthesis trifunctional protein (870 aa).

The phosphoribosyl-AMP cyclohydrolase stretch occupies residues 1–285; the sequence is METTLPLPFL…KFVVKQKGRF (285 aa). The phosphoribosyl-ATP pyrophosphohydrolase stretch occupies residues 286–367; the sequence is CHLDQSGCFG…FYFALTRAVA (82 aa). Residues 368-870 form a histidinol dehydrogenase region; the sequence is AGVTLADIER…IRLEHMSKSN (503 aa). 2 residues coordinate Zn(2+): Gln-693 and His-696. Active-site residues include Glu-762 and His-763. Asp-796 and His-855 together coordinate Zn(2+).

This sequence in the C-terminal section; belongs to the histidinol dehydrogenase family. The cofactor is Zn(2+).

The catalysed reaction is 1-(5-phospho-beta-D-ribosyl)-5'-AMP + H2O = 1-(5-phospho-beta-D-ribosyl)-5-[(5-phospho-beta-D-ribosylamino)methylideneamino]imidazole-4-carboxamide. It carries out the reaction 1-(5-phospho-beta-D-ribosyl)-ATP + H2O = 1-(5-phospho-beta-D-ribosyl)-5'-AMP + diphosphate + H(+). The enzyme catalyses L-histidinol + 2 NAD(+) + H2O = L-histidine + 2 NADH + 3 H(+). Its pathway is amino-acid biosynthesis; L-histidine biosynthesis; L-histidine from 5-phospho-alpha-D-ribose 1-diphosphate: step 2/9. It participates in amino-acid biosynthesis; L-histidine biosynthesis; L-histidine from 5-phospho-alpha-D-ribose 1-diphosphate: step 3/9. It functions in the pathway amino-acid biosynthesis; L-histidine biosynthesis; L-histidine from 5-phospho-alpha-D-ribose 1-diphosphate: step 9/9. This Neurospora crassa (strain ATCC 24698 / 74-OR23-1A / CBS 708.71 / DSM 1257 / FGSC 987) protein is Histidine biosynthesis trifunctional protein (his-3).